The primary structure comprises 255 residues: Thiazole synthase (255 aa).

Catalysis depends on K96, which acts as the Schiff-base intermediate with DXP. Residues G157, 183 to 184, and 205 to 206 each bind 1-deoxy-D-xylulose 5-phosphate; these read AG and NT.

This sequence belongs to the ThiG family. Homotetramer. Forms heterodimers with either ThiH or ThiS.

It localises to the cytoplasm. It catalyses the reaction [ThiS sulfur-carrier protein]-C-terminal-Gly-aminoethanethioate + 2-iminoacetate + 1-deoxy-D-xylulose 5-phosphate = [ThiS sulfur-carrier protein]-C-terminal Gly-Gly + 2-[(2R,5Z)-2-carboxy-4-methylthiazol-5(2H)-ylidene]ethyl phosphate + 2 H2O + H(+). It participates in cofactor biosynthesis; thiamine diphosphate biosynthesis. Its function is as follows. Catalyzes the rearrangement of 1-deoxy-D-xylulose 5-phosphate (DXP) to produce the thiazole phosphate moiety of thiamine. Sulfur is provided by the thiocarboxylate moiety of the carrier protein ThiS. In vitro, sulfur can be provided by H(2)S. The sequence is that of Thiazole synthase from Bacillus pumilus (strain SAFR-032).